Reading from the N-terminus, the 90-residue chain is Probable Fe(2+)-trafficking protein (90 aa).

The protein belongs to the Fe(2+)-trafficking protein family.

Functionally, could be a mediator in iron transactions between iron acquisition and iron-requiring processes, such as synthesis and/or repair of Fe-S clusters in biosynthetic enzymes. The sequence is that of Probable Fe(2+)-trafficking protein from Leptothrix cholodnii (strain ATCC 51168 / LMG 8142 / SP-6) (Leptothrix discophora (strain SP-6)).